Reading from the N-terminus, the 106-residue chain is uncharacterized protein (106 aa).

A run of 4 helical transmembrane segments spans residues W3 to I23, K29 to A49, M50 to V70, and F82 to L102.

The protein belongs to the drug/metabolite transporter (DMT) superfamily. Small multidrug resistance (SMR) (TC 2.A.7.1) family.

The protein localises to the cell membrane. This is an uncharacterized protein from Bacillus subtilis (strain 168).